Reading from the N-terminus, the 379-residue chain is Cytochrome b (379 aa).

The next 4 membrane-spanning stretches (helical) occupy residues 33–53 (FGSLLGLCLIIQIASGLFLAM), 77–98 (WLIRYMHANGASLFFICLYLHI), 113–133 (WNIGILLLFRTMATAFMGYVL), and 178–198 (FFAFHFILPFIIAAMAMVHLL). The heme b site is built by His83 and His97. The heme b site is built by His182 and His196. His201 is a binding site for a ubiquinone. 4 consecutive transmembrane segments (helical) span residues 226–246 (TKDFLGIVLLLAFFFTLVLFF), 288–308 (MGGVIALILSILILALFPHIQ), 320–340 (ISQFLFWLLVSDVLVLTWIGG), and 347–367 (FIIIGQIASVLYFTFILAFLP).

The protein belongs to the cytochrome b family. As to quaternary structure, the cytochrome bc1 complex contains 11 subunits: 3 respiratory subunits (MT-CYB, CYC1 and UQCRFS1), 2 core proteins (UQCRC1 and UQCRC2) and 6 low-molecular weight proteins (UQCRH/QCR6, UQCRB/QCR7, UQCRQ/QCR8, UQCR10/QCR9, UQCR11/QCR10 and a cleavage product of UQCRFS1). This cytochrome bc1 complex then forms a dimer. The cofactor is heme b.

It localises to the mitochondrion inner membrane. In terms of biological role, component of the ubiquinol-cytochrome c reductase complex (complex III or cytochrome b-c1 complex) that is part of the mitochondrial respiratory chain. The b-c1 complex mediates electron transfer from ubiquinol to cytochrome c. Contributes to the generation of a proton gradient across the mitochondrial membrane that is then used for ATP synthesis. This chain is Cytochrome b (MT-CYB), found in Dipodomys ordii (Ord's kangaroo rat).